A 427-amino-acid chain; its full sequence is Serine hydroxymethyltransferase (427 aa).

(6S)-5,6,7,8-tetrahydrofolate contacts are provided by residues Leu117 and 121–123; that span reads GHL. N6-(pyridoxal phosphate)lysine is present on Lys226.

This sequence belongs to the SHMT family. In terms of assembly, homodimer. Pyridoxal 5'-phosphate serves as cofactor.

Its subcellular location is the cytoplasm. The enzyme catalyses (6R)-5,10-methylene-5,6,7,8-tetrahydrofolate + glycine + H2O = (6S)-5,6,7,8-tetrahydrofolate + L-serine. It catalyses the reaction L-threonine = acetaldehyde + glycine. It carries out the reaction L-allo-threonine = acetaldehyde + glycine. It participates in one-carbon metabolism; tetrahydrofolate interconversion. Its pathway is amino-acid biosynthesis; glycine biosynthesis; glycine from L-serine: step 1/1. Its function is as follows. Its primary function is to catalyze the reversible interconversion of serine and glycine with tetrahydrofolate (THF) serving as the one-carbon carrier. This reaction serves as the major source of one-carbon groups required for the biosynthesis of purines, thymidylate, methionine, and other important biomolecules. Also exhibits THF-independent aldolase activity toward beta-hydroxyamino acids, producing glycine and aldehydes, via a retro-aldol mechanism. Thus, is able to catalyze the cleavage of L-threonine, L-allo-threonine, L-threo-beta-phenylserine and L-erythro-beta-phenylserine. This second activity is likely to be physiological in H.thermophilus, which is an organism that lacks the ortholog gene for the 'real' threonine aldolase characterized in mesophilic bacteria (LtaE), yeast and plants. The sequence is that of Serine hydroxymethyltransferase from Hydrogenobacter thermophilus (strain DSM 6534 / IAM 12695 / TK-6).